The sequence spans 416 residues: Glutamyl-tRNA reductase (416 aa).

Substrate-binding positions include 50 to 53 (TCNR), S109, 114 to 116 (EPQ), and Q120. C51 functions as the Nucleophile in the catalytic mechanism. 189 to 194 (GAGEMI) is an NADP(+) binding site.

It belongs to the glutamyl-tRNA reductase family. As to quaternary structure, homodimer.

The catalysed reaction is (S)-4-amino-5-oxopentanoate + tRNA(Glu) + NADP(+) = L-glutamyl-tRNA(Glu) + NADPH + H(+). The protein operates within porphyrin-containing compound metabolism; protoporphyrin-IX biosynthesis; 5-aminolevulinate from L-glutamyl-tRNA(Glu): step 1/2. Its function is as follows. Catalyzes the NADPH-dependent reduction of glutamyl-tRNA(Glu) to glutamate 1-semialdehyde (GSA). This Vesicomyosocius okutanii subsp. Calyptogena okutanii (strain HA) protein is Glutamyl-tRNA reductase.